Here is an 870-residue protein sequence, read N- to C-terminus: DNA mismatch repair protein MutS (870 aa).

Residue 621–628 (GPNMAGKS) participates in ATP binding. The disordered stretch occupies residues 813 to 834 (GAPRIAKSRRQRTPDPSPQFSL).

This sequence belongs to the DNA mismatch repair MutS family.

Its function is as follows. This protein is involved in the repair of mismatches in DNA. It is possible that it carries out the mismatch recognition step. This protein has a weak ATPase activity. The polypeptide is DNA mismatch repair protein MutS (Pelobacter propionicus (strain DSM 2379 / NBRC 103807 / OttBd1)).